Here is a 128-residue protein sequence, read N- to C-terminus: Iron-sulfur cluster insertion protein ErpA (128 aa).

Residues cysteine 56, cysteine 120, and cysteine 122 each contribute to the iron-sulfur cluster site.

This sequence belongs to the HesB/IscA family. In terms of assembly, homodimer. It depends on iron-sulfur cluster as a cofactor.

Its function is as follows. Required for insertion of 4Fe-4S clusters for at least IspG. In Xylella fastidiosa (strain M12), this protein is Iron-sulfur cluster insertion protein ErpA.